The sequence spans 279 residues: Large ribosomal subunit protein uL2 (279 aa).

Residues alanine 224–arginine 279 are disordered. Basic residues predominate over residues valine 269–arginine 279.

It belongs to the universal ribosomal protein uL2 family. In terms of assembly, part of the 50S ribosomal subunit. Forms a bridge to the 30S subunit in the 70S ribosome.

Its function is as follows. One of the primary rRNA binding proteins. Required for association of the 30S and 50S subunits to form the 70S ribosome, for tRNA binding and peptide bond formation. It has been suggested to have peptidyltransferase activity; this is somewhat controversial. Makes several contacts with the 16S rRNA in the 70S ribosome. The protein is Large ribosomal subunit protein uL2 of Cereibacter sphaeroides (strain ATCC 17025 / ATH 2.4.3) (Rhodobacter sphaeroides).